The primary structure comprises 550 residues: Protein UshA (550 aa).

Positions 1 to 25 (MKLLQRGVALALLTTFTLASETALA) are cleaved as a signal peptide. Positions 41, 43, 84, 116, 217, 252, and 254 each coordinate Zn(2+). The cysteines at positions 258 and 275 are disulfide-linked. Substrate is bound by residues 375 to 379 (RDKVR) and 498 to 504 (FNATGGD).

It belongs to the 5'-nucleotidase family. As to quaternary structure, monomer. The cofactor is Zn(2+).

Its subcellular location is the periplasm. It catalyses the reaction UDP-sugar + H2O = UMP + alpha-D-aldose 1-phosphate.. It carries out the reaction a ribonucleoside 5'-phosphate + H2O = a ribonucleoside + phosphate. Its activity is regulated as follows. The activity of this protein is inhibited by an intracellular protein inhibitor. Degradation of external UDP-glucose to uridine monophosphate and glucose-1-phosphate, which can then be used by the cell. The polypeptide is Protein UshA (ushA) (Escherichia coli (strain K12)).